The following is a 359-amino-acid chain: Serine/threonine-protein kinase mos (359 aa).

The Protein kinase domain occupies Val63 to Ala336. ATP is bound by residues Leu69–Val77 and Lys90. The active-site Proton acceptor is the Asp189.

The protein belongs to the protein kinase superfamily. Ser/Thr protein kinase family.

It is found in the cytoplasm. It carries out the reaction L-seryl-[protein] + ATP = O-phospho-L-seryl-[protein] + ADP + H(+). The enzyme catalyses L-threonyl-[protein] + ATP = O-phospho-L-threonyl-[protein] + ADP + H(+). Its function is as follows. Serine/threonine kinase involved in the regulation of MAPK signaling. The protein is Serine/threonine-protein kinase mos (mos) of Xenopus laevis (African clawed frog).